The sequence spans 96 residues: DNA-binding protein HmvA (96 aa).

An interaction with DNA region spans residues 52–55 (KTIK).

This sequence belongs to the archaeal histone HMF family. In terms of assembly, homodimer. Dimers then assemble into higher oligomers, with the DNA wrapped around the protein core.

The protein resides in the cytoplasm. Its subcellular location is the chromosome. Functionally, binds and compact DNA (95 to 150 base pairs) to form nucleosome-like structures that contain positive DNA supercoils. Increases the resistance of DNA to thermal denaturation (in vitro). The protein is DNA-binding protein HmvA (hmvA) of Methanocaldococcus jannaschii (strain ATCC 43067 / DSM 2661 / JAL-1 / JCM 10045 / NBRC 100440) (Methanococcus jannaschii).